The sequence spans 308 residues: Ecto-ADP-ribosyltransferase 5 (308 aa).

The first 23 residues, Met-1–Ala-23, serve as a signal peptide directing secretion. The cysteines at positions 43 and 259 are disulfide-linked. The 191-residue stretch at Ala-63–Thr-253 folds into the TR mART core domain. Tyr-100 contacts NAD(+). N-linked (GlcNAc...) asparagine glycosylation is present at Asn-102. NAD(+)-binding residues include Arg-161 and Gln-181. Residue Arg-161 is part of the active site. Residue Ser-184 is part of the active site. A glycan (N-linked (GlcNAc...) asparagine) is linked at Asn-197. Ser-215 contributes to the NAD(+) binding site. Glu-222 is a catalytic residue. A glycan (N-linked (GlcNAc...) asparagine) is linked at Asn-251.

This sequence belongs to the Arg-specific ADP-ribosyltransferase family.

Its subcellular location is the secreted. It is found in the membrane. It carries out the reaction L-arginyl-[protein] + NAD(+) = N(omega)-(ADP-D-ribosyl)-L-arginyl-[protein] + nicotinamide + H(+). This Rattus norvegicus (Rat) protein is Ecto-ADP-ribosyltransferase 5 (Art5).